The sequence spans 106 residues: uncharacterized protein (106 aa).

2 consecutive transmembrane segments (helical) span residues 25-45 and 62-82; these read VMNV…IHYI and ICFL…NFQG.

Its subcellular location is the membrane. This is an uncharacterized protein from Saccharomyces cerevisiae (strain ATCC 204508 / S288c) (Baker's yeast).